A 616-amino-acid chain; its full sequence is Dihydroxy-acid dehydratase (616 aa).

Residue Asp81 coordinates Mg(2+). A [2Fe-2S] cluster-binding site is contributed by Cys122. Residues Asp123 and Lys124 each contribute to the Mg(2+) site. Position 124 is an N6-carboxylysine (Lys124). [2Fe-2S] cluster is bound at residue Cys197. Residue Glu493 participates in Mg(2+) binding. Ser519 acts as the Proton acceptor in catalysis.

It belongs to the IlvD/Edd family. As to quaternary structure, homodimer. [2Fe-2S] cluster is required as a cofactor. The cofactor is Mg(2+).

The enzyme catalyses (2R)-2,3-dihydroxy-3-methylbutanoate = 3-methyl-2-oxobutanoate + H2O. The catalysed reaction is (2R,3R)-2,3-dihydroxy-3-methylpentanoate = (S)-3-methyl-2-oxopentanoate + H2O. The protein operates within amino-acid biosynthesis; L-isoleucine biosynthesis; L-isoleucine from 2-oxobutanoate: step 3/4. Its pathway is amino-acid biosynthesis; L-valine biosynthesis; L-valine from pyruvate: step 3/4. Functionally, functions in the biosynthesis of branched-chain amino acids. Catalyzes the dehydration of (2R,3R)-2,3-dihydroxy-3-methylpentanoate (2,3-dihydroxy-3-methylvalerate) into 2-oxo-3-methylpentanoate (2-oxo-3-methylvalerate) and of (2R)-2,3-dihydroxy-3-methylbutanoate (2,3-dihydroxyisovalerate) into 2-oxo-3-methylbutanoate (2-oxoisovalerate), the penultimate precursor to L-isoleucine and L-valine, respectively. The protein is Dihydroxy-acid dehydratase of Corynebacterium kroppenstedtii (strain DSM 44385 / JCM 11950 / CIP 105744 / CCUG 35717).